Consider the following 209-residue polypeptide: Protease (209 aa).

Residues His60, Asp77, and Cys127 contribute to the active site.

The protein belongs to the peptidase C5 family. As to quaternary structure, interacts with protease cofactor pVI-C; this interaction is necessary for protease activation.

The protein localises to the virion. It is found in the host nucleus. It carries out the reaction Cleaves proteins of the adenovirus and its host cell at two consensus sites: -Yaa-Xaa-Gly-Gly-|-Xaa- and -Yaa-Xaa-Gly-Xaa-|-Gly- (in which Yaa is Met, Ile or Leu, and Xaa is any amino acid).. Its activity is regulated as follows. Requires DNA and protease cofactor for maximal activation. Inside nascent virions, becomes partially activated by binding to the viral DNA, allowing it to cleave the cofactor that binds to the protease and fully activates it. Actin, like the viral protease cofactor, seems to act as a cofactor in the cleavage of cytokeratin 18 and of actin itself. In terms of biological role, cleaves viral precursor proteins (pTP, pIIIa, pVI, pVII, pVIII, and pX) inside newly assembled particles giving rise to mature virions. Protease complexed to its cofactor slides along the viral DNA to specifically locate and cleave the viral precursors. Mature virions have a weakened organization compared to the unmature virions, thereby facilitating subsequent uncoating. Without maturation, the particle lacks infectivity and is unable to uncoat. Late in adenovirus infection, in the cytoplasm, may participate in the cytoskeleton destruction. Cleaves host cell cytoskeletal keratins K7 and K18. The polypeptide is Protease (Homo sapiens (Human)).